The following is a 166-amino-acid chain: Large ribosomal subunit protein uL10 (166 aa).

Belongs to the universal ribosomal protein uL10 family. In terms of assembly, part of the ribosomal stalk of the 50S ribosomal subunit. The N-terminus interacts with L11 and the large rRNA to form the base of the stalk. The C-terminus forms an elongated spine to which L12 dimers bind in a sequential fashion forming a multimeric L10(L12)X complex.

Its function is as follows. Forms part of the ribosomal stalk, playing a central role in the interaction of the ribosome with GTP-bound translation factors. In Shouchella clausii (strain KSM-K16) (Alkalihalobacillus clausii), this protein is Large ribosomal subunit protein uL10.